The following is a 384-amino-acid chain: MALRRCLPQYSTTSSYLSKIWGFRMHGTKAAASVVEEHVSGAEREDEEYADVDWDNLGFSLVRTDFMFATKSCRDGNFEQGYLSRYGNIELNPAAGILNYGQGLIEGMKAYRGEDGRVLLFRPELNAMRMKIGAERMCMHSPSVHQFIEGVKQTVLANRRWVPPPGKGSLYLRPLLFGSGASLGVAAASEYTFLVFGSPVQNYFKEGTAALNLYVEEVIPRAYLGGTGGVKAISNYGPVLEVMRRAKSRGFSDVLYLDADTGKNIEEVSAANIFLVKGNTIVTPATSGTILGGITRKSIIEIALDLGYKVEERSVPVEELKEAEEVFCTGTAAGVASVGSITFKNTRTEYKVGDGIVTQQLRSILVGIQTGSIQDTKDWVLQIA.

A mitochondrion-targeting transit peptide spans 1–18 (MALRRCLPQYSTTSSYLS). Residue lysine 231 is modified to N6-(pyridoxal phosphate)lysine.

It belongs to the class-IV pyridoxal-phosphate-dependent aminotransferase family. Pyridoxal 5'-phosphate serves as cofactor.

The protein resides in the mitochondrion. The catalysed reaction is L-leucine + 2-oxoglutarate = 4-methyl-2-oxopentanoate + L-glutamate. It carries out the reaction L-isoleucine + 2-oxoglutarate = (S)-3-methyl-2-oxopentanoate + L-glutamate. The enzyme catalyses L-valine + 2-oxoglutarate = 3-methyl-2-oxobutanoate + L-glutamate. Its pathway is amino-acid degradation; L-leucine degradation; 4-methyl-2-oxopentanoate from L-leucine (aminotransferase route): step 1/1. It participates in amino-acid degradation; L-valine degradation. In terms of biological role, converts 2-oxo acids to branched-chain amino acids. Acts on leucine, isoleucine and valine. The polypeptide is Branched-chain-amino-acid aminotransferase 1, mitochondrial (BCAT1) (Arabidopsis thaliana (Mouse-ear cress)).